An 89-amino-acid polypeptide reads, in one-letter code: cAMP-regulated phosphoprotein 21 (89 aa).

Positions 1 to 89 (MSEQGDLNQA…GGESLQDQTL (89 aa)) are disordered. The residue at position 2 (serine 2) is an N-acetylserine. The span at 9 to 25 (QAIAEEGGTEQETATPE) shows a compositional bias: low complexity. The residue at position 33 (serine 33) is a Phosphoserine. The span at 40-53 (LELQRRLEAQNQER) shows a compositional bias: basic and acidic residues. At serine 56 the chain carries Phosphoserine.

In terms of assembly, interacts with CALM1. In terms of processing, phosphorylation at Ser-56 favors interaction with CALM1.

It localises to the cytoplasm. Functionally, may act as a competitive inhibitor of calmodulin-dependent enzymes such as calcineurin in neurons. The protein is cAMP-regulated phosphoprotein 21 (ARPP21) of Pongo abelii (Sumatran orangutan).